We begin with the raw amino-acid sequence, 203 residues long: Peptidyl-tRNA hydrolase (203 aa).

Tyrosine 18 serves as a coordination point for tRNA. Histidine 23 (proton acceptor) is an active-site residue. Residues tyrosine 69, asparagine 71, and asparagine 117 each contribute to the tRNA site.

It belongs to the PTH family. Monomer.

Its subcellular location is the cytoplasm. It catalyses the reaction an N-acyl-L-alpha-aminoacyl-tRNA + H2O = an N-acyl-L-amino acid + a tRNA + H(+). Functionally, hydrolyzes ribosome-free peptidyl-tRNAs (with 1 or more amino acids incorporated), which drop off the ribosome during protein synthesis, or as a result of ribosome stalling. In terms of biological role, catalyzes the release of premature peptidyl moieties from peptidyl-tRNA molecules trapped in stalled 50S ribosomal subunits, and thus maintains levels of free tRNAs and 50S ribosomes. This is Peptidyl-tRNA hydrolase from Parasynechococcus marenigrum (strain WH8102).